Consider the following 110-residue polypeptide: Evasin P1166 (110 aa).

The N-terminal stretch at 1-24 (MEVKIFTLLQIALFIALGIHLVVA) is a signal peptide. 3 disulfide bridges follow: C45-C67, C49-C69, and C60-C80. An N-linked (GlcNAc...) asparagine glycan is attached at N48. Positions 89–110 (SEYPNPKSSEIDAAAPLPRETH) are disordered.

It is found in the secreted. Salivary chemokine-binding protein which binds to host chemokines CXCL1, CXCL2 and CXCL8. The sequence is that of Evasin P1166 from Ixodes ricinus (Common tick).